The following is a 395-amino-acid chain: Nuclear hormone receptor family member nhr-10 (395 aa).

Residues 15–90 constitute a DNA-binding region (nuclear receptor); sequence EEVCLVCSDI…VGMDRNAIQQ (76 aa). NR C4-type zinc fingers lie at residues 18–38 and 54–78; these read CLVCSDISTGYHYGVPSCNGC and CQFQGKCPVDKSIRCACRHCRFEKC. The 241-residue stretch at 152 to 392 folds into the NR LBD domain; sequence PSRTLIEAVV…TFAKQLLFGI (241 aa).

This sequence belongs to the nuclear hormone receptor family.

Its subcellular location is the nucleus. Probable transcription factor that acts in a feed-forward loop with nhr-68 to activate genes involved in the vitamin B12-independent breakdown of the short-chain fatty acid propionate. This pathway is triggered in response to a diet low in vitamin B12, when canonical vitamin B12-dependent propionate breakdown cannot function; the resulting accumulation of propionate is probably sensed by nhr-10 and/or nhr-68. The protein is Nuclear hormone receptor family member nhr-10 (nhr-10) of Caenorhabditis elegans.